The sequence spans 324 residues: D-alanine--D-alanine ligase (324 aa).

Positions 112–312 (KAVLAAAGVT…FDQLVLWIVE (201 aa)) constitute an ATP-grasp domain. ATP is bound at residue 139-193 (LQPPYVVKPNAEGSSVGVFIIKEGANRPPEEVGAPSWTFGEEVMVEPYIQGMELA). D265, E279, and N281 together coordinate Mg(2+).

Belongs to the D-alanine--D-alanine ligase family. It depends on Mg(2+) as a cofactor. The cofactor is Mn(2+).

Its subcellular location is the cytoplasm. It carries out the reaction 2 D-alanine + ATP = D-alanyl-D-alanine + ADP + phosphate + H(+). Its pathway is cell wall biogenesis; peptidoglycan biosynthesis. Its function is as follows. Cell wall formation. This Caulobacter vibrioides (strain ATCC 19089 / CIP 103742 / CB 15) (Caulobacter crescentus) protein is D-alanine--D-alanine ligase.